A 182-amino-acid polypeptide reads, in one-letter code: Acireductone dioxygenase (182 aa).

Fe(2+) contacts are provided by H100, H102, E106, and H145. Ni(2+) contacts are provided by H100, H102, E106, and H145.

The protein belongs to the acireductone dioxygenase (ARD) family. As to quaternary structure, monomer. Requires Fe(2+) as cofactor. Ni(2+) is required as a cofactor.

The enzyme catalyses 1,2-dihydroxy-5-(methylsulfanyl)pent-1-en-3-one + O2 = 3-(methylsulfanyl)propanoate + CO + formate + 2 H(+). It carries out the reaction 1,2-dihydroxy-5-(methylsulfanyl)pent-1-en-3-one + O2 = 4-methylsulfanyl-2-oxobutanoate + formate + 2 H(+). Its pathway is amino-acid biosynthesis; L-methionine biosynthesis via salvage pathway; L-methionine from S-methyl-5-thio-alpha-D-ribose 1-phosphate: step 5/6. Its function is as follows. Catalyzes 2 different reactions between oxygen and the acireductone 1,2-dihydroxy-3-keto-5-methylthiopentene (DHK-MTPene) depending upon the metal bound in the active site. Fe-containing acireductone dioxygenase (Fe-ARD) produces formate and 2-keto-4-methylthiobutyrate (KMTB), the alpha-ketoacid precursor of methionine in the methionine recycle pathway. Ni-containing acireductone dioxygenase (Ni-ARD) produces methylthiopropionate, carbon monoxide and formate, and does not lie on the methionine recycle pathway. This is Acireductone dioxygenase from Trichormus variabilis (strain ATCC 29413 / PCC 7937) (Anabaena variabilis).